Here is a 293-residue protein sequence, read N- to C-terminus: Succinate--CoA ligase [ADP-forming] subunit alpha (293 aa).

CoA-binding positions include 21 to 24, Lys47, and 99 to 101; these read TGKQ and ITE. Tyr162 is a substrate binding site. Residue His249 is the Tele-phosphohistidine intermediate of the active site.

The protein belongs to the succinate/malate CoA ligase alpha subunit family. In terms of assembly, heterotetramer of two alpha and two beta subunits.

It catalyses the reaction succinate + ATP + CoA = succinyl-CoA + ADP + phosphate. The enzyme catalyses GTP + succinate + CoA = succinyl-CoA + GDP + phosphate. Its pathway is carbohydrate metabolism; tricarboxylic acid cycle; succinate from succinyl-CoA (ligase route): step 1/1. Its function is as follows. Succinyl-CoA synthetase functions in the citric acid cycle (TCA), coupling the hydrolysis of succinyl-CoA to the synthesis of either ATP or GTP and thus represents the only step of substrate-level phosphorylation in the TCA. The alpha subunit of the enzyme binds the substrates coenzyme A and phosphate, while succinate binding and nucleotide specificity is provided by the beta subunit. This chain is Succinate--CoA ligase [ADP-forming] subunit alpha, found in Methanothermobacter thermautotrophicus (strain ATCC 29096 / DSM 1053 / JCM 10044 / NBRC 100330 / Delta H) (Methanobacterium thermoautotrophicum).